The primary structure comprises 156 residues: Small ribosomal subunit protein uS7 (156 aa).

It belongs to the universal ribosomal protein uS7 family. Part of the 30S ribosomal subunit. Contacts proteins S9 and S11.

One of the primary rRNA binding proteins, it binds directly to 16S rRNA where it nucleates assembly of the head domain of the 30S subunit. Is located at the subunit interface close to the decoding center, probably blocks exit of the E-site tRNA. The protein is Small ribosomal subunit protein uS7 of Edwardsiella ictaluri (strain 93-146).